The chain runs to 59 residues: MNFTKLFAIVLLAALVLLGQTEAGGLKKLGKKLEGVGKRVFKASEKALPVAVGIKALGK.

A signal peptide spans 1–23 (MNFTKLFAIVLLAALVLLGQTEA).

This sequence belongs to the cecropin family.

It is found in the secreted. Its function is as follows. Cecropins have lytic and antibacterial activity against several Gram-positive and Gram-negative bacteria. The chain is Cecropin-A1 (CECA1) from Aedes albopictus (Asian tiger mosquito).